A 294-amino-acid polypeptide reads, in one-letter code: Glyceraldehyde-3-phosphate dehydrogenase (294 aa).

3 residues coordinate NAD(+): Asp-19, Arg-63, and Thr-105. Residues 134 to 136 (SCT) and Thr-165 each bind D-glyceraldehyde 3-phosphate. Residue Cys-135 is the Nucleophile of the active site. N6-acetyllysine is present on Lys-177. D-glyceraldehyde 3-phosphate is bound by residues 194 to 195 (TG) and Arg-217. The residue at position 234 (Lys-234) is an N6-acetyllysine.

It belongs to the glyceraldehyde-3-phosphate dehydrogenase family. Homotetramer.

It is found in the cytoplasm. It catalyses the reaction D-glyceraldehyde 3-phosphate + phosphate + NAD(+) = (2R)-3-phospho-glyceroyl phosphate + NADH + H(+). Its pathway is carbohydrate degradation; glycolysis; pyruvate from D-glyceraldehyde 3-phosphate: step 1/5. In terms of biological role, catalyzes the oxidative phosphorylation of glyceraldehyde 3-phosphate (G3P) to 1,3-bisphosphoglycerate (BPG) using the cofactor NAD. The first reaction step involves the formation of a hemiacetal intermediate between G3P and a cysteine residue, and this hemiacetal intermediate is then oxidized to a thioester, with concomitant reduction of NAD to NADH. The reduced NADH is then exchanged with the second NAD, and the thioester is attacked by a nucleophilic inorganic phosphate to produce BPG. This chain is Glyceraldehyde-3-phosphate dehydrogenase (gap), found in Pseudescherichia vulneris (Escherichia vulneris).